The chain runs to 124 residues: S-adenosylmethionine decarboxylase proenzyme (124 aa).

The Schiff-base intermediate with substrate; via pyruvic acid role is filled by S70. S70 is subject to Pyruvic acid (Ser); by autocatalysis. Catalysis depends on H75, which acts as the Proton acceptor; for processing activity. C90 functions as the Proton donor; for catalytic activity in the catalytic mechanism.

This sequence belongs to the prokaryotic AdoMetDC family. Type 1 subfamily. Heterotetramer of two alpha and two beta chains arranged as a dimer of alpha/beta heterodimers. It depends on pyruvate as a cofactor. Post-translationally, is synthesized initially as an inactive proenzyme. Formation of the active enzyme involves a self-maturation process in which the active site pyruvoyl group is generated from an internal serine residue via an autocatalytic post-translational modification. Two non-identical subunits are generated from the proenzyme in this reaction, and the pyruvate is formed at the N-terminus of the alpha chain, which is derived from the carboxyl end of the proenzyme. The post-translation cleavage follows an unusual pathway, termed non-hydrolytic serinolysis, in which the side chain hydroxyl group of the serine supplies its oxygen atom to form the C-terminus of the beta chain, while the remainder of the serine residue undergoes an oxidative deamination to produce ammonia and the pyruvoyl group blocking the N-terminus of the alpha chain.

The catalysed reaction is S-adenosyl-L-methionine + H(+) = S-adenosyl 3-(methylsulfanyl)propylamine + CO2. Its pathway is amine and polyamine biosynthesis; S-adenosylmethioninamine biosynthesis; S-adenosylmethioninamine from S-adenosyl-L-methionine: step 1/1. Catalyzes the decarboxylation of S-adenosylmethionine to S-adenosylmethioninamine (dcAdoMet), the propylamine donor required for the synthesis of the polyamines spermine and spermidine from the diamine putrescine. This is S-adenosylmethionine decarboxylase proenzyme from Pyrobaculum neutrophilum (strain DSM 2338 / JCM 9278 / NBRC 100436 / V24Sta) (Thermoproteus neutrophilus).